The primary structure comprises 559 residues: Glutamine--tRNA ligase (559 aa).

Residues 44-54 (PEPNGYLHIGH) carry the 'HIGH' region motif. ATP is bound by residues 45–47 (EPN) and 51–57 (HIGHAKS). Positions 77 and 222 each coordinate L-glutamine. Residues Thr241 and 272 to 273 (RL) contribute to the ATP site. A 'KMSKS' region motif is present at residues 279-283 (LTSKR).

This sequence belongs to the class-I aminoacyl-tRNA synthetase family. Monomer.

Its subcellular location is the cytoplasm. It catalyses the reaction tRNA(Gln) + L-glutamine + ATP = L-glutaminyl-tRNA(Gln) + AMP + diphosphate. The polypeptide is Glutamine--tRNA ligase (Pasteurella multocida (strain Pm70)).